A 249-amino-acid polypeptide reads, in one-letter code: tRNA (guanine-N(1)-)-methyltransferase (249 aa).

S-adenosyl-L-methionine contacts are provided by residues Gly117 and 137–142 (LGDFVL).

This sequence belongs to the RNA methyltransferase TrmD family. Homodimer.

It is found in the cytoplasm. The catalysed reaction is guanosine(37) in tRNA + S-adenosyl-L-methionine = N(1)-methylguanosine(37) in tRNA + S-adenosyl-L-homocysteine + H(+). In terms of biological role, specifically methylates guanosine-37 in various tRNAs. This is tRNA (guanine-N(1)-)-methyltransferase from Janthinobacterium sp. (strain Marseille) (Minibacterium massiliensis).